The following is a 174-amino-acid chain: Adenine phosphoribosyltransferase (174 aa).

The protein belongs to the purine/pyrimidine phosphoribosyltransferase family. In terms of assembly, homodimer.

It localises to the cytoplasm. The enzyme catalyses AMP + diphosphate = 5-phospho-alpha-D-ribose 1-diphosphate + adenine. Its pathway is purine metabolism; AMP biosynthesis via salvage pathway; AMP from adenine: step 1/1. Functionally, catalyzes a salvage reaction resulting in the formation of AMP, that is energically less costly than de novo synthesis. This is Adenine phosphoribosyltransferase from Nitrosomonas eutropha (strain DSM 101675 / C91 / Nm57).